Here is a 255-residue protein sequence, read N- to C-terminus: Diphthine synthase (255 aa).

S-adenosyl-L-methionine-binding positions include L9, D85, V88, 113–114 (SI), L164, A207, and H232.

Belongs to the diphthine synthase family. In terms of assembly, homodimer.

The enzyme catalyses 2-[(3S)-amino-3-carboxypropyl]-L-histidyl-[translation elongation factor 2] + 3 S-adenosyl-L-methionine = diphthine-[translation elongation factor 2] + 3 S-adenosyl-L-homocysteine + 3 H(+). It participates in protein modification; peptidyl-diphthamide biosynthesis. S-adenosyl-L-methionine-dependent methyltransferase that catalyzes the trimethylation of the amino group of the modified target histidine residue in translation elongation factor 2 (EF-2), to form an intermediate called diphthine. The three successive methylation reactions represent the second step of diphthamide biosynthesis. The sequence is that of Diphthine synthase from Methanococcus maripaludis (strain C5 / ATCC BAA-1333).